Here is a 342-residue protein sequence, read N- to C-terminus: Ribosomal RNA small subunit methyltransferase H (342 aa).

S-adenosyl-L-methionine contacts are provided by residues 43–45 (GGY), Asp61, Phe87, Asp108, and Gln115. The segment at 322-342 (ALDEASDGMNLPPLAELEKSR) is disordered.

Belongs to the methyltransferase superfamily. RsmH family.

The protein localises to the cytoplasm. It carries out the reaction cytidine(1402) in 16S rRNA + S-adenosyl-L-methionine = N(4)-methylcytidine(1402) in 16S rRNA + S-adenosyl-L-homocysteine + H(+). Its function is as follows. Specifically methylates the N4 position of cytidine in position 1402 (C1402) of 16S rRNA. This Hyphomonas neptunium (strain ATCC 15444) protein is Ribosomal RNA small subunit methyltransferase H.